The primary structure comprises 68 residues: Neuronal regeneration-related protein (68 aa).

Positions 22–54 (EGRLPKGRLPVPKEVNRKKNDETNAASLTPLGS) are disordered. The segment covering 44-54 (TNAASLTPLGS) has biased composition (polar residues). At serine 59 the chain carries Phosphoserine.

Interacts with the latency-associated peptides (LAP) of TGFB1 and TGFB2; the interaction results in a decrease in TGFB autoinduction. Interacts with FLNA. Phosphorylated on Ser-59. Phosphorylation decreases stability and activity. Expressed in lung (at protein level).

The protein localises to the cytoplasm. In terms of biological role, may have roles in neural function. Ectopic expression augments motility of gliomas. Also promotes axonal regeneration. May also have functions in cellular differentiation. Induces differentiation of fibroblast into myofibroblast and myofibroblast ameboid migration. Increases retinoic-acid regulation of lipid-droplet biogenesis. Down-regulates the expression of TGFB1 and TGFB2 but not of TGFB3. May play a role in the regulation of alveolar generation. This Homo sapiens (Human) protein is Neuronal regeneration-related protein (NREP).